The chain runs to 324 residues: D-alanine--D-alanine ligase (324 aa).

Residues K116 to A311 enclose the ATP-grasp domain. An ATP-binding site is contributed by A142–T197. Mg(2+) is bound by residues D265, E278, and N280.

Belongs to the D-alanine--D-alanine ligase family. Mg(2+) is required as a cofactor. Mn(2+) serves as cofactor.

The protein localises to the cytoplasm. It catalyses the reaction 2 D-alanine + ATP = D-alanyl-D-alanine + ADP + phosphate + H(+). The protein operates within cell wall biogenesis; peptidoglycan biosynthesis. In terms of biological role, cell wall formation. The protein is D-alanine--D-alanine ligase of Pseudomonas fluorescens (strain Pf0-1).